A 55-amino-acid polypeptide reads, in one-letter code: Large ribosomal subunit protein bL33 (55 aa).

This sequence belongs to the bacterial ribosomal protein bL33 family.

The chain is Large ribosomal subunit protein bL33 from Bartonella quintana (strain Toulouse) (Rochalimaea quintana).